The chain runs to 358 residues: uncharacterized protein (358 aa).

Positions 324–358 are disordered; sequence DMEVEETPPTTNKDLPRGATQPKRNSIKRVSKLID. Over residues 348–358 the composition is skewed to basic residues; the sequence is NSIKRVSKLID.

This is an uncharacterized protein from Mycoplasma pneumoniae (strain ATCC 29342 / M129 / Subtype 1) (Mycoplasmoides pneumoniae).